The following is an 867-amino-acid chain: Bifunctional cis-abienol synthase, chloroplastic (867 aa).

The transit peptide at 1 to 49 directs the protein to the chloroplast; the sequence is MALPVYSLKSHIPITTIASAKMNYTPNKGMITANGRSRRIRLSPNKIVA. Lys270 contributes to the substrate binding site. Positions 403–406 match the DXDD motif motif; the sequence is DIDD. Substrate is bound at residue Lys490. Residues Asp622, Asp626, Asn763, Asp764, Thr767, and Glu771 each coordinate Mg(2+). Positions 622 to 626 match the DDXXD motif motif; it reads DDLYD.

The protein belongs to the terpene synthase family. Tpsd subfamily. Mg(2+) is required as a cofactor.

It localises to the plastid. The protein localises to the chloroplast. The enzyme catalyses 8-hydroxycopalyl diphosphate = cis-abienol + diphosphate. It carries out the reaction (2E,6E,10E)-geranylgeranyl diphosphate + H2O = 8-hydroxycopalyl diphosphate. The protein operates within terpene metabolism; oleoresin biosynthesis. Involved in the biosynthesis of cis-abienol, a labdane diterpene that can be used as synthesis precursor of ambergris substitution fragance products. Bifunctional class I/II enzyme in which both the bicyclization and water capture occur in the class II active site, resulting in an intermediary labda-13-en-8-ol diphosphate, which undergoes cleavage of the diphosphate group and final deprotonation at the class I active site. No activity with copalyl diphosphate as substrate. The sequence is that of Bifunctional cis-abienol synthase, chloroplastic (CAS) from Abies balsamea (Balsam fir).